The following is a 265-amino-acid chain: Elongation factor 1-delta (265 aa).

Positions 31–54 are enriched in polar residues; that stretch reads MGSASNKPHNSPQSAASALSNSGD. Disordered stretches follow at residues 31-64 and 118-155; these read MGSASNKPHNSPQSAASALSNSGDGSELAARVAN and KVQVTPAAKEENGTGEDDDDDDDIDLFGSDNEEEDAEA. Positions 130–153 are enriched in acidic residues; that stretch reads GTGEDDDDDDDIDLFGSDNEEEDA.

It belongs to the EF-1-beta/EF-1-delta family. As to quaternary structure, EF-1 is composed of 4 subunits: alpha, beta, delta, and gamma.

Its function is as follows. EF-1-beta and EF-1-delta stimulate the exchange of GDP bound to EF-1-alpha to GTP. In Xenopus laevis (African clawed frog), this protein is Elongation factor 1-delta (eef1d).